The sequence spans 926 residues: OTU domain-containing protein 7A (926 aa).

A disordered region spans residues 75 to 99 (PHVFNEGRGPKQPEREPQPGHKVER). The span at 82–99 (RGPKQPEREPQPGHKVER) shows a compositional bias: basic and acidic residues. Position 119 is a phosphoserine (serine 119). The tract at residues 168–410 (ERDLIEQATM…AVDPGKDWEW (243 aa)) is TRAF-binding. Positions 183–449 (AGRLNWWSTV…VTWIRIPSET (267 aa)) are catalytic. The OTU domain occupies 199 to 374 (LLPLATTGDG…QAHFSALVSM (176 aa)). Aspartate 207 is an active-site residue. Cysteine 210 functions as the Nucleophile in the catalytic mechanism. The active-site Proton acceptor is the histidine 367. Disordered regions lie at residues 452 to 514 (PLAQ…DSVA), 537 to 613 (GLVH…DAWK), and 668 to 768 (EQEQ…APAR). Over residues 481–491 (VCSNSNSNNGK) the composition is skewed to low complexity. A compositionally biased stretch (basic and acidic residues) spans 492-510 (NGKDKEKEKQRKEKDKTRA). The Nuclear localization signal motif lies at 494 to 509 (KDKEKEKQRKEKDKTR). Composition is skewed to low complexity over residues 576-592 (GASA…PSPT), 677-691 (ATAA…AATA), and 729-742 (PAAG…AGGT). Omega-N-methylarginine is present on arginine 880. The A20-type zinc finger occupies 884–919 (GPVQRRCQRENCAFYGRAETEHYCSYCYREELRRRR). Zn(2+)-binding residues include cysteine 890, cysteine 895, cysteine 907, and cysteine 910.

It belongs to the peptidase C64 family.

The protein localises to the cytoplasm. Its subcellular location is the nucleus. It catalyses the reaction Thiol-dependent hydrolysis of ester, thioester, amide, peptide and isopeptide bonds formed by the C-terminal Gly of ubiquitin (a 76-residue protein attached to proteins as an intracellular targeting signal).. Its function is as follows. Deubiquitinase, which cleaves 'Lys-11'-linked polyubiquitin chains. Might be required for PA28-20S proteasome assembly. The chain is OTU domain-containing protein 7A (OTUD7A) from Homo sapiens (Human).